The following is a 318-amino-acid chain: Probable serine/threonine-protein kinase MRK1 homolog (318 aa).

A Protein kinase domain is found at 40–313 (YRYVEMIGRG…ASELLRKQFF (274 aa)). Residues 46–54 (IGRGSFGVV) and Lys-68 contribute to the ATP site. Asp-159 acts as the Proton acceptor in catalysis.

Belongs to the protein kinase superfamily. CMGC Ser/Thr protein kinase family. GSK-3 subfamily.

It localises to the cytoplasm. It is found in the nucleus. The enzyme catalyses L-seryl-[protein] + ATP = O-phospho-L-seryl-[protein] + ADP + H(+). It catalyses the reaction L-threonyl-[protein] + ATP = O-phospho-L-threonyl-[protein] + ADP + H(+). May play a role in the initiation and completion of mitosis. In Encephalitozoon cuniculi (strain GB-M1) (Microsporidian parasite), this protein is Probable serine/threonine-protein kinase MRK1 homolog (MRK1).